The following is a 208-amino-acid chain: Ribonuclease HII (208 aa).

In terms of domain architecture, RNase H type-2 spans 1–205; that stretch reads MIVVGIDEAG…LQEIAPNYYI (205 aa). Asp7, Glu8, and Asp104 together coordinate a divalent metal cation.

It belongs to the RNase HII family. Requires Mn(2+) as cofactor. The cofactor is Mg(2+).

The protein localises to the cytoplasm. The catalysed reaction is Endonucleolytic cleavage to 5'-phosphomonoester.. Endonuclease that specifically degrades the RNA of RNA-DNA hybrids. In Sulfurisphaera tokodaii (strain DSM 16993 / JCM 10545 / NBRC 100140 / 7) (Sulfolobus tokodaii), this protein is Ribonuclease HII.